A 1176-amino-acid chain; its full sequence is Pesticidal crystal protein Cry1Aa (1176 aa).

The protein belongs to the delta endotoxin family.

Its function is as follows. Promotes colloidosmotic lysis by binding to the midgut epithelial cells of many lepidopteran larvae. The chain is Pesticidal crystal protein Cry1Aa (cry1Aa) from Bacillus thuringiensis subsp. aizawai.